The chain runs to 618 residues: Leucine aminopeptidase 2 (618 aa).

Residues 139–141 (QCQ) and 271–276 (PYGGME) contribute to the a peptide site. A Zn(2+)-binding site is contributed by H300. The active-site Proton acceptor is E301. Positions 304 and 323 each coordinate Zn(2+). Y388 acts as the Proton donor in catalysis.

The protein belongs to the peptidase M1 family. It depends on Zn(2+) as a cofactor.

Its subcellular location is the cytoplasm. The protein resides in the nucleus. The catalysed reaction is an epoxide + H2O = an ethanediol. Its function is as follows. Aminopeptidase that preferentially cleaves di- and tripeptides. Also has low epoxide hydrolase activity (in vitro). Can hydrolyze the epoxide leukotriene LTA(4) but it forms preferentially 5,6-dihydroxy-7,9,11,14-eicosatetraenoic acid rather than the cytokine leukotriene B(4) as the product compared to the homologous mammalian enzyme (in vitro). In Aspergillus niger (strain ATCC MYA-4892 / CBS 513.88 / FGSC A1513), this protein is Leucine aminopeptidase 2.